Here is a 149-residue protein sequence, read N- to C-terminus: Dehydrin Rab15 (149 aa).

Residues 1-149 form a disordered region; that stretch reads MEFQGQHDNP…KIKEKLPGQH (149 aa). Positions 78 to 93 are enriched in basic and acidic residues; the sequence is KEKIKEKLPGGHKDNQ. A compositionally biased stretch (gly residues) spans 100–117; sequence TGTGGAYGPGTGTGGAYG. The segment covering 132–149 has biased composition (basic and acidic residues); the sequence is GEKKGIMDKIKEKLPGQH.

The protein belongs to the plant dehydrin family.

This is Dehydrin Rab15 (RAB15) from Triticum aestivum (Wheat).